A 494-amino-acid chain; its full sequence is Glycogen synthase (494 aa).

Lys-24 is a binding site for ADP-alpha-D-glucose.

This sequence belongs to the glycosyltransferase 1 family. Bacterial/plant glycogen synthase subfamily.

The enzyme catalyses [(1-&gt;4)-alpha-D-glucosyl](n) + ADP-alpha-D-glucose = [(1-&gt;4)-alpha-D-glucosyl](n+1) + ADP + H(+). It participates in glycan biosynthesis; glycogen biosynthesis. Functionally, synthesizes alpha-1,4-glucan chains using ADP-glucose. The sequence is that of Glycogen synthase from Aromatoleum aromaticum (strain DSM 19018 / LMG 30748 / EbN1) (Azoarcus sp. (strain EbN1)).